We begin with the raw amino-acid sequence, 953 residues long: MSDYKHTLNLPETEFPMRGDLAKREPNMLKRWYDQDLYGAIRRAKAGKPSFILHDGPPYANGSIHIGHSVNKILKDVIIKSKGLSGFDSPYVPGWDCHGLPIELKVEGMVGKPGEKVSAAEFRAECRKYAKTQIEAQKTDFIRLGVLGDWEHPYLTMDFGTEANIIRSMAKIVENGHLHKGSKPVHWCTDCGSALAEAEVEYYDKNSPSIDVRFKAVDEATVAAKFDCPEGHLGKGPISAVIWTTTPWTLPANRAIAMHADLDYALVQVEGEHPERLILAAELVKDVMDRAGIEKFHNLGYTKGVALELLRFNHPFYSFDVPVVLGDHVTLDAGTGAVHTAPGHGQEDFVVGQKYGLEVANPVGSNGVYLPDTELFAGQHVFKANAAVVEVLTERGALLHHMVFNHSYPHCWRHKTPIIFRATPQWFISMEQKGLRQRALEEIERIEKDGITQHGQSGWVPAWGKNRIQAMVENRPDWCISRQRTWGVPISLFVHKETQQLHPESVRLMHEVAKRVEQSGIQAWWDLDKAELLGSDADMYDKVPDTLDVWFDSGSTHSSVVDARPEFNGHSADLYLEGSDQHRGWFMSSLMIGVAMKDKAPYNQVLTHGFTVDGQGRKMSKSIGNVVSPQDVMNKLGADILRLWVASTDYTGEMTVSDEILKRSADAYRRIRNTARFLLANLNGFNPATDMVAAADMVVVDRWAVGRAKAAQAEIVTAFEEYNFHGVTQKLMQFCSIEMGSFYLDVIKDRQYTAKADSLARRSCQTALYHIAQAMVRWMAPIMSFTADEIWALLPGERSEFVFTEEWYDGLFGLDAGEQMDDAFWAEILTVRGEVNKALEAARGEKRIGGSLQAELTLFAKPELAERLNALADELRFVLLTSKAKVVTADTAPEGSVATERADLWLSVAQSAAAKCDRCWHHVEDVGTIAGHEEICGRCATNVEGDGETRQFA.

A 'HIGH' region motif is present at residues 58–68; that stretch reads PYANGSIHIGH. Glutamate 577 lines the L-isoleucyl-5'-AMP pocket. The 'KMSKS' region motif lies at 618–622; it reads KMSKS. Lysine 621 contacts ATP. Zn(2+)-binding residues include cysteine 916, cysteine 919, cysteine 936, and cysteine 939.

This sequence belongs to the class-I aminoacyl-tRNA synthetase family. IleS type 1 subfamily. Monomer. Requires Zn(2+) as cofactor.

Its subcellular location is the cytoplasm. It carries out the reaction tRNA(Ile) + L-isoleucine + ATP = L-isoleucyl-tRNA(Ile) + AMP + diphosphate. Functionally, catalyzes the attachment of isoleucine to tRNA(Ile). As IleRS can inadvertently accommodate and process structurally similar amino acids such as valine, to avoid such errors it has two additional distinct tRNA(Ile)-dependent editing activities. One activity is designated as 'pretransfer' editing and involves the hydrolysis of activated Val-AMP. The other activity is designated 'posttransfer' editing and involves deacylation of mischarged Val-tRNA(Ile). In Aeromonas salmonicida (strain A449), this protein is Isoleucine--tRNA ligase.